Reading from the N-terminus, the 351-residue chain is UDP-N-acetylglucosamine--N-acetylmuramyl-(pentapeptide) pyrophosphoryl-undecaprenol N-acetylglucosamine transferase (351 aa).

UDP-N-acetyl-alpha-D-glucosamine-binding positions include threonine 12–glycine 14, asparagine 124, arginine 160, serine 188, isoleucine 239, alanine 258–glutamate 263, and glutamine 283.

It belongs to the glycosyltransferase 28 family. MurG subfamily.

The protein localises to the cell inner membrane. The enzyme catalyses di-trans,octa-cis-undecaprenyl diphospho-N-acetyl-alpha-D-muramoyl-L-alanyl-D-glutamyl-meso-2,6-diaminopimeloyl-D-alanyl-D-alanine + UDP-N-acetyl-alpha-D-glucosamine = di-trans,octa-cis-undecaprenyl diphospho-[N-acetyl-alpha-D-glucosaminyl-(1-&gt;4)]-N-acetyl-alpha-D-muramoyl-L-alanyl-D-glutamyl-meso-2,6-diaminopimeloyl-D-alanyl-D-alanine + UDP + H(+). It participates in cell wall biogenesis; peptidoglycan biosynthesis. In terms of biological role, cell wall formation. Catalyzes the transfer of a GlcNAc subunit on undecaprenyl-pyrophosphoryl-MurNAc-pentapeptide (lipid intermediate I) to form undecaprenyl-pyrophosphoryl-MurNAc-(pentapeptide)GlcNAc (lipid intermediate II). This chain is UDP-N-acetylglucosamine--N-acetylmuramyl-(pentapeptide) pyrophosphoryl-undecaprenol N-acetylglucosamine transferase, found in Glaesserella parasuis serovar 5 (strain SH0165) (Haemophilus parasuis).